The primary structure comprises 1025 residues: Multidrug resistance protein MdtC (1025 aa).

Over 1–6 (MKFFAL) the chain is Cytoplasmic. Residues 7–29 (FIYRPVATILLSVAITLCGILGF) form a helical membrane-spanning segment. Residues 30–335 (RMLPVAPLPQ…TIRASLEEVE (306 aa)) are Periplasmic-facing. A helical membrane pass occupies residues 336-353 (QTLIISVALVILVVFLFL). Residues 354–359 (RSGRAT) are Cytoplasmic-facing. Residues 360–379 (IIPAVAVPVSLIGTFAAMYL) traverse the membrane as a helical segment. Residues 380–388 (CGFSLNNLS) lie on the Periplasmic side of the membrane. Residues 389–411 (LMALTIATGFVVDDAIVVLENIA) form a helical membrane-spanning segment. Topologically, residues 412 to 430 (RHLEAGMKPLQAALQGTRE) are cytoplasmic. A helical membrane pass occupies residues 431–453 (VGFTVLSMSLSLVAVFLPLLLMG). The Periplasmic segment spans residues 454-467 (GLPGRLLREFAVTL). The chain crosses the membrane as a helical span at residues 468–490 (SVAIGISLLVSLTLTPMMCGWML). The Cytoplasmic portion of the chain corresponds to 491–852 (KASKPREQKR…QVFQETMNSQ (362 aa)). A helical transmembrane segment spans residues 853–875 (VILIIAAIATVYIVLGILYESYV). At 876 to 894 (HPLTILSTLPSAGVGALLA) the chain is on the periplasmic side. The helical transmembrane segment at 895-917 (LELFNAPFSLIALIGIMLLIGIV) threads the bilayer. The Cytoplasmic portion of the chain corresponds to 918–947 (KKNAIMMVDFALEAQRHGNLTPQEAIFQAC). A helical transmembrane segment spans residues 948 to 970 (LLRFRPIMMTTLAALFGALPLVL). The Periplasmic segment spans residues 971–984 (SGGDGSELRQPLGI). A helical transmembrane segment spans residues 985–1007 (TIVGGLVMSQLLTLYTTPVVYLF). Residues 1008 to 1025 (FDRLRLRFSRKPKQAVTE) are Cytoplasmic-facing.

This sequence belongs to the resistance-nodulation-cell division (RND) (TC 2.A.6) family. MdtC subfamily. Part of a tripartite efflux system composed of MdtA, MdtB and MdtC. MdtC forms a heteromultimer with MdtB.

The protein resides in the cell inner membrane. The MdtABC tripartite complex confers resistance against novobiocin and deoxycholate. The chain is Multidrug resistance protein MdtC from Escherichia coli O6:H1 (strain CFT073 / ATCC 700928 / UPEC).